The primary structure comprises 807 residues: PGC-1 and ERR-induced regulator in muscle protein 1 (807 aa).

Disordered regions lie at residues 29–80 (QADL…EDVA), 121–391 (CPGQ…TPAS), and 517–548 (PSHEDSGSGEPTGSPFLTPEQPPVPRTAAGSR). Composition is skewed to low complexity over residues 40–52 (SSDIDQGDSSGSS) and 145–160 (PAPSSPSKAPHSPESP). Residues 162-171 (HSDNPQSSPD) are compositionally biased toward polar residues. Positions 180 to 194 (PGRKKRRAVGAKGTK) are enriched in basic residues. Polar residues-rich tracts occupy residues 195 to 211 (HSGSLDSAATQMSSPQL), 311 to 346 (KPQSDIASSTHPFTPDVSLSTLAFKCQPNTNQSTPA), and 363 to 391 (ALSTPASEPDTALSTPASEPDTALSTPAS). Serine 198 is modified (phosphoserine). Threonine 534 is subject to Phosphothreonine. The residue at position 548 (arginine 548) is an Omega-N-methylarginine.

Highly expressed in skeletal muscles and heart with lower levels in brown adipose tissue (at protein level). Muscle-specific expression is increased by endurance exercise.

It localises to the cytoplasm. Its subcellular location is the nucleus. In terms of biological role, regulates the expression of selective PPARGC1A/B and ESRRA/B/G target genes with roles in glucose and lipid metabolism, energy transfer, contractile function, muscle mitochondrial biogenesis and oxidative capacity. Required for the efficient induction of MT-CO2, MT-CO3, COX4I1, TFB1M, TFB2M, POLRMT and SIRT3 by PPARGC1A. Positively regulates the PPARGC1A/ESRRG-induced expression of CKMT2, TNNI3 and SLC2A4 and negatively regulates the PPARGC1A/ESRRG-induced expression of PDK4. The sequence is that of PGC-1 and ERR-induced regulator in muscle protein 1 (Perm1) from Mus musculus (Mouse).